A 354-amino-acid chain; its full sequence is NADH-ubiquinone oxidoreductase chain 2 (354 aa).

The next 10 membrane-spanning stretches (helical) occupy residues 5 to 25 (ILMV…SSHH), 26 to 46 (WFTL…ILSY), 60 to 80 (FLVQ…QAWL), 96 to 116 (FLMT…YWFP), 122 to 142 (VGFI…FAVL), 149 to 169 (LNIS…GWGG), 198 to 218 (VSVA…VFFM), 242 to 262 (AGLV…GFLI), 274 to 294 (GCFI…FFYL), and 330 to 350 (VLLS…PVFI).

Belongs to the complex I subunit 2 family.

It is found in the mitochondrion inner membrane. It carries out the reaction a ubiquinone + NADH + 5 H(+)(in) = a ubiquinol + NAD(+) + 4 H(+)(out). Functionally, core subunit of the mitochondrial membrane respiratory chain NADH dehydrogenase (Complex I) that is believed to belong to the minimal assembly required for catalysis. Complex I functions in the transfer of electrons from NADH to the respiratory chain. The immediate electron acceptor for the enzyme is believed to be ubiquinone. The chain is NADH-ubiquinone oxidoreductase chain 2 (ND2) from Patiria pectinifera (Starfish).